The chain runs to 531 residues: Coiled-coil domain-containing protein 9 (531 aa).

The interval 40–531 (EDRKKAELEG…PGEAWPFESV (492 aa)) is disordered. A compositionally biased stretch (basic and acidic residues) spans 59-72 (RSVEKENVAVESEK). Serine 80 is subject to Phosphoserine. Threonine 95 bears the Phosphothreonine mark. Arginine 107 carries the post-translational modification Omega-N-methylarginine. Serine 111 is subject to Phosphoserine. Omega-N-methylarginine is present on residues arginine 121, arginine 128, and arginine 130. An asymmetric dimethylarginine mark is found at arginine 131, arginine 133, and arginine 135. Serine 137 carries the post-translational modification Phosphoserine. Basic and acidic residues-rich tracts occupy residues 148 to 185 (ISDR…REGV), 194 to 217 (FLDD…EESR), and 227 to 241 (DFER…ERQG). Residues 149-185 (SDRKSKEWEERRRQNIEKMNEEMEKIAEYERNQREGV) are a coiled coil. Serine 202 bears the Phosphoserine mark. Residues serine 248 and serine 255 each carry the phosphoserine modification. Composition is skewed to basic and acidic residues over residues 258–279 (GRER…QERL), 289–302 (WRRE…DGMF), 311–320 (EPSHRYDDQA), and 361–372 (YSDHDDRWETKE). 3 positions are modified to phosphoserine: serine 376, serine 386, and serine 390. Residues 386-395 (SPETSPKETP) show a composition bias toward low complexity. Residues 396–406 (MQPPEIPAPAH) show a composition bias toward pro residues. Residues 411-446 (DEGEENEGEEDEEWEDISEDEEEEEIEVEEGDEEEP) show a composition bias toward acidic residues. A Phosphoserine modification is found at serine 521.

As to quaternary structure, probable component of the exon junction complex (EJC); the association is RNA-dependent.

Functionally, probable component of the exon junction complex (EJC), a multiprotein complex that associates immediately upstream of the exon-exon junction on mRNAs and serves as a positional landmark for the intron exon structure of genes and directs post-transcriptional processes in the cytoplasm such as mRNA export, nonsense-mediated mRNA decay (NMD) or translation. The chain is Coiled-coil domain-containing protein 9 from Homo sapiens (Human).